A 170-amino-acid chain; its full sequence is Lipoprotein signal peptidase (170 aa).

The next 3 helical transmembrane spans lie at 9–29 (FNIF…KYLV), 72–92 (IFFL…SLKE), and 96–118 (IARI…RLFR). Catalysis depends on residues aspartate 124 and aspartate 146. Residues 143–163 (NFADSYVVIGMILFLVYDFFI) traverse the membrane as a helical segment.

The protein belongs to the peptidase A8 family.

It localises to the cell inner membrane. The enzyme catalyses Release of signal peptides from bacterial membrane prolipoproteins. Hydrolyzes -Xaa-Yaa-Zaa-|-(S,diacylglyceryl)Cys-, in which Xaa is hydrophobic (preferably Leu), and Yaa (Ala or Ser) and Zaa (Gly or Ala) have small, neutral side chains.. It participates in protein modification; lipoprotein biosynthesis (signal peptide cleavage). Its function is as follows. This protein specifically catalyzes the removal of signal peptides from prolipoproteins. This Borreliella afzelii (strain PKo) (Borrelia afzelii) protein is Lipoprotein signal peptidase.